Here is a 274-residue protein sequence, read N- to C-terminus: MTAFWGEVIGTMLLIIFGAGVCAGVNLKKSLSFQSGWIVVVFGWGLGVAMAAYAVGGISGAHLNPALTIALAFVGDFPWKEVPVYIAAQMIGAIIGAVIIYLHYLPHWKSTDDPAAKLGVFSTGPSIPHTFANVLSEVIGTFVLVLGILAIGANQFTEGLNPLIVGFLIVAIGISLGGTTGYAINPARDLGPRIAHAFLPIPGKGSSNWKYAWVPVVGPILGGSFGGVFYNAAFKGHITSSFWIVSVILVVVLLGLYVYTKSHSAKTLSNSKYI.

The next 2 membrane-spanning stretches (helical) occupy residues 3-23 (AFWGEVIGTMLLIIFGAGVCA) and 38-58 (IVVVFGWGLGVAMAAYAVGGI). Positions 64–66 (NPA) match the NPA 1 motif. 3 helical membrane passes run 82–102 (VPVYIAAQMIGAIIGAVIIYL), 131–151 (FANVLSEVIGTFVLVLGILAI), and 164–184 (IVGFLIVAIGISLGGTTGYAI). Residues 185-187 (NPA) carry the NPA 2 motif. A helical membrane pass occupies residues 238-258 (ITSSFWIVSVILVVVLLGLYV).

This sequence belongs to the MIP/aquaporin (TC 1.A.8) family.

It localises to the cell membrane. The catalysed reaction is glycerol(in) = glycerol(out). Mediates glycerol diffusion across the cytoplasmic membrane via a pore-type mechanism. This Bacillus subtilis (strain 168) protein is Glycerol uptake facilitator protein (glpF).